Reading from the N-terminus, the 100-residue chain is Acylphosphatase (100 aa).

The Acylphosphatase-like domain occupies 14–100 (RLSAWVHGHV…RGDLTGFEER (87 aa)). Active-site residues include arginine 29 and asparagine 47.

This sequence belongs to the acylphosphatase family.

The catalysed reaction is an acyl phosphate + H2O = a carboxylate + phosphate + H(+). This chain is Acylphosphatase (acyP), found in Nocardia farcinica (strain IFM 10152).